We begin with the raw amino-acid sequence, 251 residues long: 1-(5-phosphoribosyl)-5-[(5-phosphoribosylamino)methylideneamino] imidazole-4-carboxamide isomerase (251 aa).

Asp-8 functions as the Proton acceptor in the catalytic mechanism. Residue Asp-131 is the Proton donor of the active site.

This sequence belongs to the HisA/HisF family.

It localises to the cytoplasm. The catalysed reaction is 1-(5-phospho-beta-D-ribosyl)-5-[(5-phospho-beta-D-ribosylamino)methylideneamino]imidazole-4-carboxamide = 5-[(5-phospho-1-deoxy-D-ribulos-1-ylimino)methylamino]-1-(5-phospho-beta-D-ribosyl)imidazole-4-carboxamide. The protein operates within amino-acid biosynthesis; L-histidine biosynthesis; L-histidine from 5-phospho-alpha-D-ribose 1-diphosphate: step 4/9. The polypeptide is 1-(5-phosphoribosyl)-5-[(5-phosphoribosylamino)methylideneamino] imidazole-4-carboxamide isomerase (Burkholderia ambifaria (strain MC40-6)).